A 405-amino-acid chain; its full sequence is BRCA1-A complex subunit Abraxas 1 (405 aa).

Positions S7–L153 constitute an MPN domain. Positions S208 to I262 form a coiled coil. The tract at residues L365–F405 is disordered. S402 carries the post-translational modification Phosphoserine. A pSXXF motif motif is present at residues S402–F405.

The protein belongs to the FAM175 family. Abraxas subfamily. As to quaternary structure, component of the BRCA1-A complex. Component of the BRISC complex. Homodimer. Interacts directly (when phosphorylated at Ser-402) with BRCA1. The phosphorylated homodimer can interact directly with two BRCA1 chains, giving rise to a heterotetramer. In terms of processing, phosphorylation of Ser-402 of the pSXXF motif by ATM or ATR constitutes a specific recognition motif for the BRCT domain of BRCA1.

The protein localises to the nucleus. In terms of biological role, involved in DNA damage response and double-strand break (DSB) repair. Component of the BRCA1-A complex, acting as a central scaffold protein that assembles the various components of the complex and mediates the recruitment of BRCA1. The BRCA1-A complex specifically recognizes 'Lys-63'-linked ubiquitinated histones H2A and H2AX at DNA lesion sites, leading to target the BRCA1-BARD1 heterodimer to sites of DNA damage at DSBs. This complex also possesses deubiquitinase activity that specifically removes 'Lys-63'-linked ubiquitin on histones H2A and H2AX. In Gallus gallus (Chicken), this protein is BRCA1-A complex subunit Abraxas 1.